We begin with the raw amino-acid sequence, 310 residues long: Light-independent protochlorophyllide reductase iron-sulfur ATP-binding protein (310 aa).

Residues 53 to 58 (GIGKST) and Lys-82 contribute to the ATP site. Ser-57 contacts Mg(2+). Cys-138 and Cys-172 together coordinate [4Fe-4S] cluster. ATP contacts are provided by residues 223–224 (NR) and 247–249 (PAL).

This sequence belongs to the NifH/BchL/ChlL family. Homodimer. Protochlorophyllide reductase is composed of three subunits; BchL, BchN and BchB. The cofactor is [4Fe-4S] cluster.

It catalyses the reaction chlorophyllide a + oxidized 2[4Fe-4S]-[ferredoxin] + 2 ADP + 2 phosphate = protochlorophyllide a + reduced 2[4Fe-4S]-[ferredoxin] + 2 ATP + 2 H2O. The protein operates within porphyrin-containing compound metabolism; bacteriochlorophyll biosynthesis (light-independent). Functionally, component of the dark-operative protochlorophyllide reductase (DPOR) that uses Mg-ATP and reduced ferredoxin to reduce ring D of protochlorophyllide (Pchlide) to form chlorophyllide a (Chlide). This reaction is light-independent. The L component serves as a unique electron donor to the NB-component of the complex, and binds Mg-ATP. This Rhodopseudomonas palustris (strain BisA53) protein is Light-independent protochlorophyllide reductase iron-sulfur ATP-binding protein.